A 361-amino-acid chain; its full sequence is Tetraacyldisaccharide 4'-kinase (361 aa).

68–75 (TVGGTGKT) lines the ATP pocket.

It belongs to the LpxK family.

The enzyme catalyses a lipid A disaccharide + ATP = a lipid IVA + ADP + H(+). Its pathway is glycolipid biosynthesis; lipid IV(A) biosynthesis; lipid IV(A) from (3R)-3-hydroxytetradecanoyl-[acyl-carrier-protein] and UDP-N-acetyl-alpha-D-glucosamine: step 6/6. Functionally, transfers the gamma-phosphate of ATP to the 4'-position of a tetraacyldisaccharide 1-phosphate intermediate (termed DS-1-P) to form tetraacyldisaccharide 1,4'-bis-phosphate (lipid IVA). In Pelobacter propionicus (strain DSM 2379 / NBRC 103807 / OttBd1), this protein is Tetraacyldisaccharide 4'-kinase.